We begin with the raw amino-acid sequence, 84 residues long: Small ribosomal subunit protein bS16 (84 aa).

It belongs to the bacterial ribosomal protein bS16 family.

The polypeptide is Small ribosomal subunit protein bS16 (Cupriavidus pinatubonensis (strain JMP 134 / LMG 1197) (Cupriavidus necator (strain JMP 134))).